We begin with the raw amino-acid sequence, 370 residues long: Alpha-(1,3)-fucosyltransferase 7 (370 aa).

The Cytoplasmic segment spans residues 1 to 36 (MVQGCLCWRGCCDLKTSFPWVTNSRRLWMNCIGCNP). A helical; Signal-anchor for type II membrane protein transmembrane segment spans residues 37–59 (VWRLRAWGCLAGGTTLMVIWLFW). Residues 60 to 370 (LLRSVPGGAP…YEDLESWFQA (311 aa)) lie on the Lumenal side of the membrane. Asparagine 86 is a glycosylation site (N-linked (GlcNAc...) asparagine). Cysteine 96 and cysteine 104 are disulfide-bonded. Asparagine 109 is a glycosylation site (N-linked (GlcNAc...) asparagine). Cysteine 239 and cysteine 242 are joined by a disulfide. Asparagine 319 is a glycosylation site (N-linked (GlcNAc...) asparagine). An intrachain disulfide couples cysteine 346 to cysteine 349.

Belongs to the glycosyltransferase 10 family. Post-translationally, N-glycosylated. Expressed in lymph node and kidney.

The protein resides in the golgi apparatus. Its subcellular location is the golgi stack membrane. It carries out the reaction an N-acetyl-alpha-neuraminyl-(2-&gt;3)-beta-D-galactosyl-(1-&gt;4)-N-acetyl-beta-D-glucosaminyl derivative + GDP-beta-L-fucose = an alpha-Neu5Ac-(2-&gt;3)-beta-D-Gal-(1-&gt;4)-[alpha-L-Fuc-(1-&gt;3)]-beta-D-GlcNAc derivative + GDP + H(+). The catalysed reaction is a neolactoside IV(3)-alpha-NeuAc-nLc4Cer + GDP-beta-L-fucose = a neolactoside IV(3)-alpha-NeuNAc,III(3)-alpha-Fuc-nLc4Cer + GDP + H(+). The enzyme catalyses a neolactoside VI(3)-alpha-NeuNAc-nLc6Cer + GDP-beta-L-fucose = a neolactoside VI(3)-alpha-NeuAc,V(3)-alphaFuc-nLc6Cer + GDP + H(+). It catalyses the reaction an alpha-Neu5Ac-(2-&gt;3)-beta-D-Gal-(1-&gt;4)-beta-D-GlcNAc-(1-&gt;3)-beta-D-Gal-(1-&gt;4)-[alpha-L-Fuc-(1-&gt;3)]-beta-D-GlcNAc derivative + GDP-beta-L-fucose = an alpha-Neu5Ac-(2-&gt;3)-beta-D-Gal-(1-&gt;4)-[alpha-L-Fuc-(1-&gt;3)]-beta-D-GlcNAc-(1-&gt;3)-beta-D-Gal-(1-&gt;4)-[alpha-L-Fuc-(1-&gt;3)]-beta-D-GlcNAc derivative + GDP + H(+). It carries out the reaction an alpha-Neu5Ac-(2-&gt;3)-beta-D-Gal-(1-&gt;4)-beta-D-GlcNAc6S derivative + GDP-beta-L-fucose = an alpha-Neu5Ac-(2-&gt;3)-beta-D-Gal-(1-&gt;4)-[alpha-L-Fuc-(1-&gt;3)]-beta-D-GlcNAc6S derivative + GDP + H(+). The catalysed reaction is alpha-Neu5Ac-(2-&gt;3)-beta-D-Gal-(1-&gt;4)-beta-D-GlcNAc-(1-&gt;3)-beta-D-Gal-(1-&gt;4)-D-Glc + GDP-beta-L-fucose = alpha-Neu5Ac-(2-&gt;3)-beta-D-Gal-(1-&gt;4)-[alpha-L-Fuc-(1-&gt;3)]-beta-D-GlcNAc-(1-&gt;3)-beta-D-Gal-(1-&gt;4)-D-Glc + GDP + H(+). The enzyme catalyses alpha-Neu5Ac-(2-&gt;3)-beta-D-Gal-(1-&gt;4)-beta-D-GlcNAc-(1-&gt;3)-beta-D-Gal-(1-&gt;4)-[alpha-L-Fuc-(1-&gt;3)]-beta-D-GlcNAc-(1-&gt;3)-beta-D-Gal-(1-&gt;4)-beta-D-GlcNAc + GDP-beta-L-fucose = alpha-Neu5Ac-(2-&gt;3)-beta-D-Gal-(1-&gt;4)-[alpha-L-Fuc-(1-&gt;3)]-beta-D-GlcNAc-(1-&gt;3)-beta-D-Gal-(1-&gt;4)-[alpha-L-Fuc-(1-&gt;3)]-beta-D-GlcNAc-(1-&gt;3)-beta-D-Gal-(1-&gt;4)-beta-D-GlcNAc + GDP + H(+). It catalyses the reaction alpha-Neu5Ac-(2-&gt;3)-beta-D-Gal-(1-&gt;4)-beta-D-GlcNAc-(1-&gt;3)-beta-D-Gal-(1-&gt;4)-beta-D-GlcNAc-(1-&gt;3)-beta-D-Gal-(1-&gt;4)-beta-D-GlcNAc + GDP-beta-L-fucose = alpha-Neu5Ac-(2-&gt;3)-beta-D-Gal-(1-&gt;4)-[alpha-L-Fuc-(1-&gt;3)]-beta-D-GlcNAc-(1-&gt;3)-beta-D-Gal-(1-&gt;4)-beta-D-GlcNAc-(1-&gt;3)-beta-D-Gal-(1-&gt;4)-beta-D-GlcNAc + GDP + H(+). The protein operates within protein modification; protein glycosylation. Inhibited by NaCl. Inhibited by GDP in a concentration dependent manner, with an IC(50) value of 93 uM. Also inhibited by GMP and GTP. Inhibited by N-ethylmaleimide. Activated by poly(ethylene glycol) by enhancing the thermal stability of FUT7. Activated by Mn2+, Ca2+, and Mg2+. Both panosialin A and B inhibit activity with IC(50) values of 4.8 and 5.3 ug/ml, respectively. Inhibited by gallic acid (GA) and (-)-epigallocatechin gallate (EGCG) in a time-dependent and irreversible manner with IC(50) values of 60 and 700 nM, respectively. In terms of biological role, catalyzes the transfer of L-fucose, from a guanosine diphosphate-beta-L-fucose, to the N-acetyl glucosamine (GlcNAc) of a distal alpha2,3 sialylated lactosamine unit of a glycoprotein or a glycolipid-linked sialopolylactosamines chain through an alpha-1,3 glycosidic linkage and participates in the final fucosylation step in the biosynthesis of the sialyl Lewis X (sLe(x)), a carbohydrate involved in cell and matrix adhesion during leukocyte trafficking and fertilization. In vitro, also synthesizes sialyl-dimeric-Lex structures, from VIM-2 structures and both di-fucosylated and trifucosylated structures from mono-fucosylated precursors. However does not catalyze alpha 1-3 fucosylation when an internal alpha 1-3 fucosylation is present in polylactosamine chain and the fucosylation rate of the internal GlcNAc residues is reduced once fucose has been added to the distal GlcNAc. Also catalyzes the transfer of a fucose from GDP-beta-fucose to the 6-sulfated a(2,3)sialylated substrate to produce 6-sulfo sLex mediating significant L-selectin-dependent cell adhesion. Through sialyl-Lewis(x) biosynthesis, can control SELE- and SELP-mediated cell adhesion with leukocytes and allows leukocytes tethering and rolling along the endothelial tissue thereby enabling the leukocytes to accumulate at a site of inflammation. May enhance embryo implantation through sialyl Lewis X (sLeX)-mediated adhesion of embryo cells to endometrium. May affect insulin signaling by up-regulating the phosphorylation and expression of some signaling molecules involved in the insulin-signaling pathway through SLe(x) which is present on the glycans of the INSRR alpha subunit. The protein is Alpha-(1,3)-fucosyltransferase 7 of Rattus norvegicus (Rat).